Consider the following 249-residue polypeptide: 2,3-bisphosphoglycerate-dependent phosphoglycerate mutase 2 (249 aa).

Substrate contacts are provided by residues 8–15 (RHGESIWN), 21–22 (TG), R60, 87–90 (ERHY), K98, 114–115 (RR), and 183–184 (GN). H9 serves as the catalytic Tele-phosphohistidine intermediate. E87 (proton donor/acceptor) is an active-site residue.

The protein belongs to the phosphoglycerate mutase family. BPG-dependent PGAM subfamily. Homodimer.

The catalysed reaction is (2R)-2-phosphoglycerate = (2R)-3-phosphoglycerate. Its pathway is carbohydrate degradation; glycolysis; pyruvate from D-glyceraldehyde 3-phosphate: step 3/5. Its function is as follows. Catalyzes the interconversion of 2-phosphoglycerate and 3-phosphoglycerate. This Nitrosomonas europaea (strain ATCC 19718 / CIP 103999 / KCTC 2705 / NBRC 14298) protein is 2,3-bisphosphoglycerate-dependent phosphoglycerate mutase 2.